A 105-amino-acid polypeptide reads, in one-letter code: uncharacterized protein (105 aa).

This is an uncharacterized protein from Archaeoglobus fulgidus (strain ATCC 49558 / DSM 4304 / JCM 9628 / NBRC 100126 / VC-16).